The primary structure comprises 1020 residues: Protein translocase subunit SecA (1020 aa).

ATP-binding positions include Gln99, 117–121 (GEGKT), and Asp633. The tract at residues 963-992 (NEQPSQEMAADEETQEESKIEENKPEPIVV) is disordered. Residues 978 to 987 (EESKIEENKP) are compositionally biased toward basic and acidic residues. Zn(2+)-binding residues include Cys1002, Cys1004, Cys1013, and Cys1014.

It belongs to the SecA family. Monomer and homodimer. Part of the essential Sec protein translocation apparatus which comprises SecA, SecYEG and auxiliary proteins SecDF. Other proteins may also be involved. Requires Zn(2+) as cofactor.

It is found in the cell inner membrane. It localises to the cytoplasm. It carries out the reaction ATP + H2O + cellular proteinSide 1 = ADP + phosphate + cellular proteinSide 2.. Functionally, part of the Sec protein translocase complex. Interacts with the SecYEG preprotein conducting channel. Has a central role in coupling the hydrolysis of ATP to the transfer of proteins into and across the cell membrane, serving as an ATP-driven molecular motor driving the stepwise translocation of polypeptide chains across the membrane. This Protochlamydia amoebophila (strain UWE25) protein is Protein translocase subunit SecA.